Here is a 356-residue protein sequence, read N- to C-terminus: Outer spore wall protein LDS2 (356 aa).

Residues 1 to 92 lie on the Cytoplasmic side of the membrane; that stretch reads MSTRPQPDWY…ISESVGNSDY (92 aa). The helical transmembrane segment at 93-113 threads the bilayer; sequence LHLFFLIFGYYLLNLLLIVAF. The Extracellular segment spans residues 114 to 115; that stretch reads TS. Residues 116 to 136 traverse the membrane as a helical segment; sequence ILAWSLLVCIYLPFLGLFALP. Topologically, residues 137-213 are cytoplasmic; that stretch reads LAYMQTILIS…KRFYLVSLPQ (77 aa). The helical transmembrane segment at 214-234 threads the bilayer; that stretch reads FFIFFFWYIFIAFMFLLLLLV. The Extracellular segment spans residues 235–294; the sequence is PIVGPITINMLPFSPGMGFYYFEPYFVDVLHLDSRKLSKVYYKGFAKWLLYSISSGLLES. Residues 295 to 315 traverse the membrane as a helical segment; the sequence is IPILGGLFIGTNAVGASLWIV. At 316 to 356 the chain is on the cytoplasmic side; sequence KEIKDRDQPAVPPSPPAEPEEPTVGSYAPPIQQSIAHINPP. Residues 322–356 form a disordered region; the sequence is DQPAVPPSPPAEPEEPTVGSYAPPIQQSIAHINPP. The span at 346–356 shows a compositional bias: polar residues; the sequence is IQQSIAHINPP.

This sequence belongs to the LDS family.

It localises to the prospore membrane. It is found in the lipid droplet. The protein localises to the spore wall. Involved in spore wall assembly. This chain is Outer spore wall protein LDS2, found in Saccharomyces cerevisiae (strain ATCC 204508 / S288c) (Baker's yeast).